The chain runs to 170 residues: Mediator of RNA polymerase II transcription subunit 10 (170 aa).

It belongs to the Mediator complex subunit 10 family. As to quaternary structure, component of the Mediator complex.

Its subcellular location is the nucleus. Component of the Mediator complex, a coactivator involved in the regulated transcription of nearly all RNA polymerase II-dependent genes. Mediator functions as a bridge to convey information from gene-specific regulatory proteins to the basal RNA polymerase II transcription machinery. Mediator is recruited to promoters by direct interactions with regulatory proteins and serves as a scaffold for the assembly of a functional preinitiation complex with RNA polymerase II and the general transcription factors. In Candida albicans (strain SC5314 / ATCC MYA-2876) (Yeast), this protein is Mediator of RNA polymerase II transcription subunit 10 (NUT2).